The sequence spans 217 residues: Monomethylamine corrinoid protein 1 (217 aa).

Residues 1–91 (MANQEIFDKL…ELEKNKKEGE (91 aa)) form the B12-binding N-terminal domain. The B12-binding domain maps to 93 to 217 (AGLAITFVAE…AAKVALEVMK (125 aa)). His106 contributes to the methylcob(III)alamin binding site.

Can form a complex with MtmB.

The protein operates within one-carbon metabolism; methanogenesis from methylamine. Its function is as follows. Acts as a methyl group carrier between MtmB and MtbA. The protein is Monomethylamine corrinoid protein 1 (mtmC1) of Methanosarcina barkeri.